A 99-amino-acid polypeptide reads, in one-letter code: Large ribosomal subunit protein uL23 (99 aa).

It belongs to the universal ribosomal protein uL23 family. As to quaternary structure, part of the 50S ribosomal subunit. Contacts protein L29, and trigger factor when it is bound to the ribosome.

In terms of biological role, one of the early assembly proteins it binds 23S rRNA. One of the proteins that surrounds the polypeptide exit tunnel on the outside of the ribosome. Forms the main docking site for trigger factor binding to the ribosome. The chain is Large ribosomal subunit protein uL23 from Clavibacter michiganensis subsp. michiganensis (strain NCPPB 382).